We begin with the raw amino-acid sequence, 494 residues long: MRPPGFRNFLLLASSLLFAGLSAVPQSFSPSLRSWPGAACRLSRAESERRCRAPGQPPGAALCHGRGRCDCGVCICHVTEPGMFFGPLCECHEWVCETYDGSTCAGHGKCDCGKCKCDQGWYGDACQYPTNCDLTKKKSNQMCKNSQDIICSNAGTCHCGRCKCDNSDGSGLVYGKFCECDDRECIDDETEEICGGHGKCYCGNCYCKAGWHGDKCEFQCDITPWESKRRCTSPDGKICSNRGTCVCGECTCHDVDPTGDWGDIHGDTCECDERDCRAVYDRYSDDFCSGHGQCNCGRCDCKAGWYGKKCEHPQSCTLSAEESIRKCQGSSDLPCSGRGKCECGKCTCYPPGDRRVYGKTCECDDRRCEDLDGVVCGGHGTCSCGRCVCERGWFGKLCQHPRKCNMTEEQSKNLCESADGILCSGKGSCHCGKCICSAEEWYISGEFCDCDDRDCDKHDGLICTGNGICSCGNCECWDGWNGNACEIWLGSEYP.

The signal sequence occupies residues 1–23 (MRPPGFRNFLLLASSLLFAGLSA). Disulfide bonds link Cys40–Cys71, Cys51–Cys69, Cys63–Cys74, Cys76–Cys89, Cys91–Cys112, Cys96–Cys110, Cys104–Cys115, Cys117–Cys126, Cys132–Cys159, Cys143–Cys157, Cys151–Cys162, Cys164–Cys178, Cys180–Cys202, Cys185–Cys200, Cys194–Cys205, Cys207–Cys216, Cys220–Cys247, Cys231–Cys245, Cys239–Cys250, Cys252–Cys269, Cys271–Cys296, Cys276–Cys294, Cys288–Cys299, Cys301–Cys310, Cys316–Cys343, Cys327–Cys341, Cys335–Cys346, Cys348–Cys361, Cys363–Cys384, Cys368–Cys382, Cys376–Cys387, Cys389–Cys398, Cys404–Cys431, Cys415–Cys429, Cys423–Cys434, Cys436–Cys448, Cys450–Cys471, Cys455–Cys469, Cys463–Cys474, and Cys476–Cys485. 10 I-EGF domains span residues 40–90 (CRLS…PLCE), 91–127 (CHEWVCETYDGSTCAGHGKCDCGKCKCDQGWYGDACQ), 132–179 (CDLT…KFCE), 180–217 (CDDRECIDDETEEICGGHGKCYCGNCYCKAGWHGDKCE), 220–270 (CDIT…DTCE), 271–311 (CDER…KKCE), 316–362 (CTLS…KTCE), 363–399 (CDDRRCEDLDGVVCGGHGTCSCGRCVCERGWFGKLCQ), 404–449 (CNMT…EFCD), and 450–486 (CDDRDCDKHDGLICTGNGICSCGNCECWDGWNGNACE). The stretch at 51-95 (CRAPGQPPGAALCHGRGRCDCGVCICHVTEPGMFFGPLCECHEWV) is one I repeat. Residues 51–494 (CRAPGQPPGA…CEIWLGSEYP (444 aa)) form a cysteine-rich tandem repeats region. One copy of the II repeat lies at 96 to 142 (CETYDGSTCAGHGKCDCGKCKCDQGWYGDACQYPTNCDLTKKKSNQM). Residues 143–184 (CKNSQDIICSNAGTCHCGRCKCDNSDGSGLVYGKFCECDDRE) form an III repeat. Residues 185-230 (CIDDETEEICGGHGKCYCGNCYCKAGWHGDKCEFQCDITPWESKRR) form an IV repeat. A V repeat occupies 231–275 (CTSPDGKICSNRGTCVCGECTCHDVDPTGDWGDIHGDTCECDERD). A VI repeat occupies 276–326 (CRAVYDRYSDDFCSGHGQCNCGRCDCKAGWYGKKCEHPQSCTLSAEESIRK). A VII repeat occupies 327–367 (CQGSSDLPCSGRGKCECGKCTCYPPGDRRVYGKTCECDDRR). The VIII repeat unit spans residues 368–414 (CEDLDGVVCGGHGTCSCGRCVCERGWFGKLCQHPRKCNMTEEQSKNL). Asn405 carries an N-linked (GlcNAc...) asparagine glycan. Residues 415–454 (CESADGILCSGKGSCHCGKCICSAEEWYISGEFCDCDDRD) form an IX repeat. The stretch at 455–494 (CDKHDGLICTGNGICSCGNCECWDGWNGNACEIWLGSEYP) is one X repeat.

In terms of tissue distribution, widely expressed in many tissues, but readily detectable only in aorta.

The protein localises to the secreted. The protein is Integrin beta-like protein 1 (ITGBL1) of Homo sapiens (Human).